The sequence spans 367 residues: Aflatoxin B1 aldehyde reductase member 2 (367 aa).

Positions 1–31 are enriched in low complexity; that stretch reads MLRAASRAVGRAAVRSAQRSGTSVGRPLAMS. Residues 1–45 form a disordered region; sequence MLRAASRAVGRAAVRSAQRSGTSVGRPLAMSRPPPPRAASGAPLR. Residues 1–46 constitute a mitochondrion transit peptide; it reads MLRAASRAVGRAAVRSAQRSGTSVGRPLAMSRPPPPRAASGAPLRP. Serine 40 carries the post-translational modification Phosphoserine. Phosphothreonine is present on threonine 48. An NADP(+)-binding site is contributed by aspartate 80. Tyrosine 85 serves as the catalytic Proton donor. An N6-acetyllysine modification is found at lysine 136. Histidine 149 lines the substrate pocket. Residues 179–180, glutamine 205, 234–244, and arginine 258 contribute to the NADP(+) site; these read SN and NPLAGGLLTGK. Position 244 is an N6-succinyllysine (lysine 244). Substrate is bound by residues tyrosine 268 and arginine 271. 326–334 serves as a coordination point for NADP(+); that stretch reads SSLEQLEQN. A substrate-binding site is contributed by arginine 367.

Belongs to the aldo/keto reductase family. Aldo/keto reductase 2 subfamily. As to quaternary structure, homodimer. Expressed in liver, kidney, testis and brain with low levels in skeletal muscle, spleen, heart and lung.

Its subcellular location is the mitochondrion. The protein resides in the golgi apparatus. It localises to the cytoplasm. The catalysed reaction is 4-hydroxybutanoate + NADP(+) = succinate semialdehyde + NADPH + H(+). Its activity is regulated as follows. Inhibited by citrate, succinate and tartrate. Its function is as follows. Catalyzes the NADPH-dependent reduction of succinic semialdehyde to gamma-hydroxybutyrate. May have an important role in producing the neuromodulator gamma-hydroxybutyrate (GHB). Has broad substrate specificity. Can reduce the dialdehyde protein-binding form of aflatoxin B1 (AFB1) to the non-binding AFB1 dialcohol. May be involved in protection of liver against the toxic and carcinogenic effects of AFB1, a potent hepatocarcinogen. The chain is Aflatoxin B1 aldehyde reductase member 2 from Mus musculus (Mouse).